A 482-amino-acid chain; its full sequence is Bifunctional protein GlmU (482 aa).

Residues 1 to 238 are pyrophosphorylase; the sequence is MSATSPAAVV…HREILGINNR (238 aa). Residues 12–15, lysine 26, glutamine 79, and 84–85 each bind UDP-N-acetyl-alpha-D-glucosamine; these read LAAG and GT. Aspartate 110 is a Mg(2+) binding site. Residues glycine 147, glutamate 163, asparagine 178, and asparagine 236 each contribute to the UDP-N-acetyl-alpha-D-glucosamine site. Asparagine 236 provides a ligand contact to Mg(2+). The tract at residues 239 to 259 is linker; it reads LQLAEARRLLNERLLERAMLA. The segment at 260 to 482 is N-acetyltransferase; the sequence is GVTVVDPAST…ASSQETDGQS (223 aa). Residues arginine 341 and lysine 359 each coordinate UDP-N-acetyl-alpha-D-glucosamine. Residue histidine 371 is the Proton acceptor of the active site. 2 residues coordinate UDP-N-acetyl-alpha-D-glucosamine: tyrosine 374 and asparagine 385. Acetyl-CoA contacts are provided by residues alanine 388, 394 to 395, serine 413, alanine 431, and arginine 448; that span reads NY. The tract at residues 458–482 is disordered; it reads VARKRPGSAAAQAAQASSQETDGQS. Low complexity predominate over residues 465 to 476; the sequence is SAAAQAAQASSQ.

This sequence in the N-terminal section; belongs to the N-acetylglucosamine-1-phosphate uridyltransferase family. It in the C-terminal section; belongs to the transferase hexapeptide repeat family. In terms of assembly, homotrimer. The cofactor is Mg(2+).

It localises to the cytoplasm. It catalyses the reaction alpha-D-glucosamine 1-phosphate + acetyl-CoA = N-acetyl-alpha-D-glucosamine 1-phosphate + CoA + H(+). It carries out the reaction N-acetyl-alpha-D-glucosamine 1-phosphate + UTP + H(+) = UDP-N-acetyl-alpha-D-glucosamine + diphosphate. It participates in nucleotide-sugar biosynthesis; UDP-N-acetyl-alpha-D-glucosamine biosynthesis; N-acetyl-alpha-D-glucosamine 1-phosphate from alpha-D-glucosamine 6-phosphate (route II): step 2/2. The protein operates within nucleotide-sugar biosynthesis; UDP-N-acetyl-alpha-D-glucosamine biosynthesis; UDP-N-acetyl-alpha-D-glucosamine from N-acetyl-alpha-D-glucosamine 1-phosphate: step 1/1. Its pathway is bacterial outer membrane biogenesis; LPS lipid A biosynthesis. Its function is as follows. Catalyzes the last two sequential reactions in the de novo biosynthetic pathway for UDP-N-acetylglucosamine (UDP-GlcNAc). The C-terminal domain catalyzes the transfer of acetyl group from acetyl coenzyme A to glucosamine-1-phosphate (GlcN-1-P) to produce N-acetylglucosamine-1-phosphate (GlcNAc-1-P), which is converted into UDP-GlcNAc by the transfer of uridine 5-monophosphate (from uridine 5-triphosphate), a reaction catalyzed by the N-terminal domain. In Streptomyces griseus subsp. griseus (strain JCM 4626 / CBS 651.72 / NBRC 13350 / KCC S-0626 / ISP 5235), this protein is Bifunctional protein GlmU.